The following is a 260-amino-acid chain: Hydroxyethylthiazole kinase 1 (260 aa).

Residue methionine 39 participates in substrate binding. The ATP site is built by arginine 115 and threonine 160. Position 187 (glycine 187) interacts with substrate.

This sequence belongs to the Thz kinase family. It depends on Mg(2+) as a cofactor.

It carries out the reaction 5-(2-hydroxyethyl)-4-methylthiazole + ATP = 4-methyl-5-(2-phosphooxyethyl)-thiazole + ADP + H(+). It functions in the pathway cofactor biosynthesis; thiamine diphosphate biosynthesis; 4-methyl-5-(2-phosphoethyl)-thiazole from 5-(2-hydroxyethyl)-4-methylthiazole: step 1/1. Functionally, catalyzes the phosphorylation of the hydroxyl group of 4-methyl-5-beta-hydroxyethylthiazole (THZ). This is Hydroxyethylthiazole kinase 1 from Streptococcus pneumoniae (strain Taiwan19F-14).